Here is a 145-residue protein sequence, read N- to C-terminus: Secreted LysM effector Vd2LysM (145 aa).

A signal peptide spans 1-18; that stretch reads MRPDVFVLFTAFLGPAAA. LysM domains lie at 31–75 and 96–140; these read GWYI…KIKV and GWYH…DIVV.

This sequence belongs to the secreted LysM effector family. Forms homodimers in a chitin-independent manner through interactions at the N-termini of EPL2 monomers. Homodimers are further polymerized in a chitin-dependent manner.

Secreted effector that enables the plant pathogenic fungus to manipulate host defenses for successful infection. Binds chitin, suppresses chitin-induced immune responses and protects hyphae against degradation by plant hydrolytic enzymes. Chitin-induced polymerization of homodimers forms a contiguous ELP2 highly oligomeric super-complexe that may precipitate at infection sites to eliminate chitin oligomers, and thus suppress the activation of chitin-induced plant immunity. The protein is Secreted LysM effector Vd2LysM of Verticillium dahliae (strain VdLs.17 / ATCC MYA-4575 / FGSC 10137) (Verticillium wilt).